Here is a 373-residue protein sequence, read N- to C-terminus: UDP-3-O-acylglucosamine N-acyltransferase 2 (373 aa).

His257 acts as the Proton acceptor in catalysis. Residues 346 to 373 (DGRTAASAEAAAPSSDATGVDQPDQAAS) form a disordered region. Over residues 350–362 (AASAEAAAPSSDA) the composition is skewed to low complexity.

This sequence belongs to the transferase hexapeptide repeat family. LpxD subfamily. In terms of assembly, homotrimer.

It catalyses the reaction a UDP-3-O-[(3R)-3-hydroxyacyl]-alpha-D-glucosamine + a (3R)-hydroxyacyl-[ACP] = a UDP-2-N,3-O-bis[(3R)-3-hydroxyacyl]-alpha-D-glucosamine + holo-[ACP] + H(+). It functions in the pathway bacterial outer membrane biogenesis; LPS lipid A biosynthesis. In terms of biological role, catalyzes the N-acylation of UDP-3-O-acylglucosamine using 3-hydroxyacyl-ACP as the acyl donor. Is involved in the biosynthesis of lipid A, a phosphorylated glycolipid that anchors the lipopolysaccharide to the outer membrane of the cell. The protein is UDP-3-O-acylglucosamine N-acyltransferase 2 of Rhodopseudomonas palustris (strain BisB18).